Reading from the N-terminus, the 459-residue chain is MSNFAIILAAGKGTRMKSDLPKVLHKVAGISMLEHVFRSVGAIQPEKTVTVVGHKAELVEEVLAGQTEFVTQSEQLGTGHAVMMTEPILEGLSGHTLVIAGDTPLITGESLKNLIDFHINHKNVATILTAETDNPFGYGRIVRNDNAEVLRIVEQKDATDFEKQIKEINTGTYVFDNERLFEALKNINTNNAQGEYYITDVIGIFRETGEKVGAYTLKDFDESLGVNDRVALATAESVMRRRINHKHMVNGVSFVNPEATYIDIDVEIAPEVQIEANVTLKGQTKIGAETVLTNGTYVVDSTIGAGAVITNSMIEESSVADGVTVGPYAHIRPNSSLGAQVHIGNFVEVKGSSIGENTKAGHLTYIGNCEVGSNVNFGAGTITVNYDGKNKYKTVIGDNVFVGSNSTIIAPVELGDNSLVGAGSTITKDVPADAIAIGRSRQINKDEYATRLPHHPKNQ.

The interval 1-229 (MSNFAIILAA…FDESLGVNDR (229 aa)) is pyrophosphorylase. Residues 8–11 (LAAG), K22, Q72, and 77–78 (GT) contribute to the UDP-N-acetyl-alpha-D-glucosamine site. D102 provides a ligand contact to Mg(2+). G139, E154, N169, and N227 together coordinate UDP-N-acetyl-alpha-D-glucosamine. Mg(2+) is bound at residue N227. The interval 230-250 (VALATAESVMRRRINHKHMVN) is linker. An N-acetyltransferase region spans residues 251–459 (GVSFVNPEAT…TRLPHHPKNQ (209 aa)). The UDP-N-acetyl-alpha-D-glucosamine site is built by R332 and K350. H362 (proton acceptor) is an active-site residue. UDP-N-acetyl-alpha-D-glucosamine is bound by residues Y365 and N376. Residues A379, 385–386 (NY), S404, A422, and R439 each bind acetyl-CoA.

The protein in the N-terminal section; belongs to the N-acetylglucosamine-1-phosphate uridyltransferase family. It in the C-terminal section; belongs to the transferase hexapeptide repeat family. As to quaternary structure, homotrimer. Requires Mg(2+) as cofactor.

It is found in the cytoplasm. It carries out the reaction alpha-D-glucosamine 1-phosphate + acetyl-CoA = N-acetyl-alpha-D-glucosamine 1-phosphate + CoA + H(+). The enzyme catalyses N-acetyl-alpha-D-glucosamine 1-phosphate + UTP + H(+) = UDP-N-acetyl-alpha-D-glucosamine + diphosphate. It functions in the pathway nucleotide-sugar biosynthesis; UDP-N-acetyl-alpha-D-glucosamine biosynthesis; N-acetyl-alpha-D-glucosamine 1-phosphate from alpha-D-glucosamine 6-phosphate (route II): step 2/2. Its pathway is nucleotide-sugar biosynthesis; UDP-N-acetyl-alpha-D-glucosamine biosynthesis; UDP-N-acetyl-alpha-D-glucosamine from N-acetyl-alpha-D-glucosamine 1-phosphate: step 1/1. It participates in bacterial outer membrane biogenesis; LPS lipid A biosynthesis. Its function is as follows. Catalyzes the last two sequential reactions in the de novo biosynthetic pathway for UDP-N-acetylglucosamine (UDP-GlcNAc). The C-terminal domain catalyzes the transfer of acetyl group from acetyl coenzyme A to glucosamine-1-phosphate (GlcN-1-P) to produce N-acetylglucosamine-1-phosphate (GlcNAc-1-P), which is converted into UDP-GlcNAc by the transfer of uridine 5-monophosphate (from uridine 5-triphosphate), a reaction catalyzed by the N-terminal domain. The chain is Bifunctional protein GlmU from Streptococcus pneumoniae (strain 70585).